The chain runs to 1404 residues: DNA-directed RNA polymerase subunit beta' (1404 aa).

4 residues coordinate Zn(2+): Cys-60, Cys-62, Cys-75, and Cys-78. Residues Asp-449, Asp-451, and Asp-453 each contribute to the Mg(2+) site. 4 residues coordinate Zn(2+): Cys-778, Cys-852, Cys-859, and Cys-862. Residues Asp-1381–Glu-1404 are disordered. Positions Leu-1384 to Glu-1404 are enriched in acidic residues.

This sequence belongs to the RNA polymerase beta' chain family. As to quaternary structure, the RNAP catalytic core consists of 2 alpha, 1 beta, 1 beta' and 1 omega subunit. When a sigma factor is associated with the core the holoenzyme is formed, which can initiate transcription. Requires Mg(2+) as cofactor. Zn(2+) serves as cofactor.

The catalysed reaction is RNA(n) + a ribonucleoside 5'-triphosphate = RNA(n+1) + diphosphate. In terms of biological role, DNA-dependent RNA polymerase catalyzes the transcription of DNA into RNA using the four ribonucleoside triphosphates as substrates. This Leptospira borgpetersenii serovar Hardjo-bovis (strain L550) protein is DNA-directed RNA polymerase subunit beta'.